The primary structure comprises 417 residues: Tyrosine--tRNA ligase (417 aa).

Position 39 (tyrosine 39) interacts with L-tyrosine. The 'HIGH' region motif lies at 44–53 (PTASSLHAGS). L-tyrosine is bound by residues tyrosine 176 and glutamine 180. Residues 236 to 240 (KMGKS) carry the 'KMSKS' region motif. Lysine 239 is an ATP binding site. Residues 350–417 (TGLLILLVQA…KKKHVLIKPL (68 aa)) form the S4 RNA-binding domain.

This sequence belongs to the class-I aminoacyl-tRNA synthetase family. TyrS type 1 subfamily. In terms of assembly, homodimer.

It localises to the cytoplasm. It catalyses the reaction tRNA(Tyr) + L-tyrosine + ATP = L-tyrosyl-tRNA(Tyr) + AMP + diphosphate + H(+). Functionally, catalyzes the attachment of tyrosine to tRNA(Tyr) in a two-step reaction: tyrosine is first activated by ATP to form Tyr-AMP and then transferred to the acceptor end of tRNA(Tyr). This chain is Tyrosine--tRNA ligase, found in Bartonella henselae (strain ATCC 49882 / DSM 28221 / CCUG 30454 / Houston 1) (Rochalimaea henselae).